A 1098-amino-acid polypeptide reads, in one-letter code: Platelet-derived growth factor receptor beta (1098 aa).

A signal peptide spans 1–31 (MGLPGVIPALVLRGQLLLSVLWLLGPQTSRG). At 32–531 (LVITPPGPEF…VVPHSLPFKV (500 aa)) the chain is on the extracellular side. Ig-like C2-type domains lie at 33–119 (VITP…YIFV), 128–209 (PMDS…YSLQ), 213–308 (INVS…INIS), 330–402 (HRSR…HEDD), and 415–523 (PVRV…VTVV). Residues asparagine 44, asparagine 88, and asparagine 102 are each glycosylated (N-linked (GlcNAc...) asparagine). Cysteines 53 and 99 form a disulfide. Cysteine 148 and cysteine 189 form a disulfide bridge. N-linked (GlcNAc...) asparagine glycosylation occurs at asparagine 214. Residues cysteine 234 and cysteine 290 are joined by a disulfide bond. 7 N-linked (GlcNAc...) asparagine glycosylation sites follow: asparagine 291, asparagine 306, asparagine 353, asparagine 370, asparagine 444, asparagine 467, and asparagine 478. Cysteine 435 and cysteine 507 are disulfide-bonded. A helical membrane pass occupies residues 532 to 552 (VVISAILALVVLTVISLIILI). The Cytoplasmic segment spans residues 553–1098 (MLWQKKPRYE…PLAEAEDSFL (546 aa)). Tyrosine 561, tyrosine 578, and tyrosine 580 each carry phosphotyrosine; by autocatalysis. The 363-residue stretch at 599-961 (LVLGRTLGSG…QLVLLLERLL (363 aa)) folds into the Protein kinase domain. ATP-binding positions include 605 to 613 (LGSGAFGQV) and lysine 633. Tyrosine 685 is modified (phosphotyrosine; by ABL1 and ABL2). Residues tyrosine 715, tyrosine 739, tyrosine 750, tyrosine 762, tyrosine 770, tyrosine 774, and tyrosine 777 each carry the phosphotyrosine; by autocatalysis modification. Aspartate 825 acts as the Proton acceptor in catalysis. Tyrosine 856 carries the phosphotyrosine; by autocatalysis modification. Phosphotyrosine; by ABL1 and ABL2 is present on residues tyrosine 933 and tyrosine 969. Phosphotyrosine; by autocatalysis is present on residues tyrosine 1008 and tyrosine 1020. Positions 1016-1098 (SDNDYIIPLP…PLAEAEDSFL (83 aa)) are disordered. Polar residues predominate over residues 1042 to 1059 (SLASSTLNEVNTSSTISC). Residues 1062–1082 (PLELQEEPQQAEPEAQLEQPQ) are compositionally biased toward low complexity.

The protein belongs to the protein kinase superfamily. Tyr protein kinase family. CSF-1/PDGF receptor subfamily. Interacts with homodimeric PDGFB and PDGFD, and with heterodimers formed by PDGFA and PDGFB. May also interact with homodimeric PDGFC. Monomer in the absence of bound ligand. Interaction with homodimeric PDGFB, heterodimers formed by PDGFA and PDGFB or homodimeric PDGFD, leads to receptor dimerization, where both PDGFRA homodimers and heterodimers with PDGFRB are observed. Interacts with SH2B2/APS. Interacts directly (tyrosine phosphorylated) with SHB. Interacts (tyrosine phosphorylated) with PIK3R1 and RASA1. Interacts (tyrosine phosphorylated) with CBL. Interacts (tyrosine phosphorylated) with SRC and SRC family kinases. Interacts (tyrosine phosphorylated) with PIK3C2B, maybe indirectly. Interacts (tyrosine phosphorylated) with SHC1, GRB7, GRB10 and NCK1. Interaction with GRB2 is mediated by SHC1. Interacts (via C-terminus) with NHERF1. In terms of processing, autophosphorylated on tyrosine residues upon ligand binding. Autophosphorylation occurs in trans, i.e. one subunit of the dimeric receptor phosphorylates tyrosine residues on the other subunit. Phosphorylation at Tyr-578, and to a lesser degree, Tyr-580 is important for interaction with SRC. Phosphorylation at Tyr-715 is important for interaction with GRB2. Phosphorylation at Tyr-739 and Tyr-750 is important for interaction with PIK3R1. Phosphorylation at Tyr-750 is important for interaction with NCK1. Phosphorylation at Tyr-770 and Tyr-856 is important for interaction with RASA1/GAP. Phosphorylation at Tyr-856 is important for efficient phosphorylation of PLCG1 and PTPN11, resulting in increased phosphorylation of AKT1, MAPK1/ERK2 and/or MAPK3/ERK1, PDCD6IP/ALIX and STAM, and in increased cell proliferation. Phosphorylation at Tyr-1008 is important for interaction with PTPN11. Phosphorylation at Tyr-1008 and Tyr-1020 is important for interaction with PLCG1. Dephosphorylated by PTPRJ at Tyr-750, Tyr-856, Tyr-1008 and Tyr-1020. Dephosphorylated by PTPN2 at Tyr-578 and Tyr-1020. N-glycosylated. Post-translationally, ubiquitinated. After autophosphorylation, the receptor is polyubiquitinated, leading to its degradation. As to expression, weakly expressed in glomerular mesangial cells and interstitial cells. Up-regulated in areas of renal fibrosis. In mice with unilateral ureteral obstruction, increased expression in interstitial cells at day 4 and expression is markedly elevated at day 7 and is maximal at day 14.

It localises to the cell membrane. Its subcellular location is the cytoplasmic vesicle. The protein resides in the lysosome lumen. It catalyses the reaction L-tyrosyl-[protein] + ATP = O-phospho-L-tyrosyl-[protein] + ADP + H(+). Its activity is regulated as follows. Present in an inactive conformation in the absence of bound ligand. Binding of PDGFB and/or PDGFD leads to dimerization and activation by autophosphorylation on tyrosine residues. In terms of biological role, tyrosine-protein kinase that acts as a cell-surface receptor for homodimeric PDGFB and PDGFD and for heterodimers formed by PDGFA and PDGFB, and plays an essential role in the regulation of embryonic development, cell proliferation, survival, differentiation, chemotaxis and migration. Plays an essential role in blood vessel development by promoting proliferation, migration and recruitment of pericytes and smooth muscle cells to endothelial cells. Plays a role in the migration of vascular smooth muscle cells and the formation of neointima at vascular injury sites. Required for normal development of the cardiovascular system. Required for normal recruitment of pericytes (mesangial cells) in the kidney glomerulus, and for normal formation of a branched network of capillaries in kidney glomeruli. Promotes rearrangement of the actin cytoskeleton and the formation of membrane ruffles. Binding of its cognate ligands - homodimeric PDGFB, heterodimers formed by PDGFA and PDGFB or homodimeric PDGFD -leads to the activation of several signaling cascades; the response depends on the nature of the bound ligand and is modulated by the formation of heterodimers between PDGFRA and PDGFRB. Phosphorylates PLCG1, PIK3R1, PTPN11, RASA1/GAP, CBL, SHC1 and NCK1. Activation of PLCG1 leads to the production of the cellular signaling molecules diacylglycerol and inositol 1,4,5-trisphosphate, mobilization of cytosolic Ca(2+) and the activation of protein kinase C. Phosphorylation of PIK3R1, the regulatory subunit of phosphatidylinositol 3-kinase, leads to the activation of the AKT1 signaling pathway. Phosphorylation of SHC1, or of the C-terminus of PTPN11, creates a binding site for GRB2, resulting in the activation of HRAS, RAF1 and down-stream MAP kinases, including MAPK1/ERK2 and/or MAPK3/ERK1. Promotes phosphorylation and activation of SRC family kinases. Promotes phosphorylation of PDCD6IP/ALIX and STAM. Receptor signaling is down-regulated by protein phosphatases that dephosphorylate the receptor and its down-stream effectors, and by rapid internalization of the activated receptor. The protein is Platelet-derived growth factor receptor beta (Pdgfrb) of Mus musculus (Mouse).